The chain runs to 937 residues: Lysosomal alpha-glucosidase (937 aa).

A signal peptide spans 1-23 (MMRWPPCSRPLLGVCTLLSLALL). Residues 24-60 (GHILLHDLEVVPRELRGFSQDEIHQACQPGASSPECR) constitute a propeptide that is removed on maturation. The P-type domain occupies 68–118 (TQCDLPPNSRFDCAPDKGITPQQCEARGCCYMPAEWPPDAQMGQPWCFFPP). Disulfide bonds link Cys70/Cys97, Cys80/Cys96, and Cys91/Cys114. 4 N-linked (GlcNAc...) asparagine glycosylation sites follow: Asn127, Asn220, Asn259, and Asn377. Asp391 is a binding site for substrate. An N-linked (GlcNAc...) asparagine glycan is attached at Asn457. Asp505 (nucleophile) is an active-site residue. Residue Glu508 is part of the active site. Cys520 and Cys545 are oxidised to a cystine. 2 residues coordinate substrate: Arg587 and Asp603. A disulfide bridge links Cys634 with Cys645. N-linked (GlcNAc...) asparagine glycosylation occurs at Asn639. His661 is a substrate binding site. Asn867, Asn888, and Asn910 each carry an N-linked (GlcNAc...) asparagine glycan.

It belongs to the glycosyl hydrolase 31 family.

The protein resides in the lysosome. The protein localises to the lysosome membrane. It carries out the reaction Hydrolysis of terminal, non-reducing (1-&gt;4)-linked alpha-D-glucose residues with release of alpha-D-glucose.. In terms of biological role, essential for the degradation of glycogen in lysosomes. Has highest activity on alpha-1,4-linked glycosidic linkages, but can also hydrolyze alpha-1,6-linked glucans. The chain is Lysosomal alpha-glucosidase (GAA) from Bos taurus (Bovine).